Here is a 115-residue protein sequence, read N- to C-terminus: NADH-ubiquinone oxidoreductase chain 3 (115 aa).

3 helical membrane passes run 3–23, 55–75, and 84–104; these read FVLALTINTLLALLLMILTFW, FFLVAITFLLFDLEIALLLPL, and LPLMTTSSLMLIIILALGLTY.

This sequence belongs to the complex I subunit 3 family. As to quaternary structure, core subunit of respiratory chain NADH dehydrogenase (Complex I) which is composed of 45 different subunits. Interacts with TMEM186. Interacts with TMEM242.

The protein resides in the mitochondrion inner membrane. The catalysed reaction is a ubiquinone + NADH + 5 H(+)(in) = a ubiquinol + NAD(+) + 4 H(+)(out). Core subunit of the mitochondrial membrane respiratory chain NADH dehydrogenase (Complex I) which catalyzes electron transfer from NADH through the respiratory chain, using ubiquinone as an electron acceptor. Essential for the catalytic activity of complex I. This is NADH-ubiquinone oxidoreductase chain 3 from Pongo pygmaeus (Bornean orangutan).